The primary structure comprises 453 residues: MGLPIVAIVGRPNVGKSTLVNRLTGMMDAIVHDSPGVTRDRTYRPALWNGRDFSLVDTGGLVFDDQTEFLPFIRQQVMIALAEATVVVMVVDGQAGPTPADHEIAHWLRQQDTPVLLAVNKCESPEQGITQAAQFWELSLDEPLPVSGIHGNGTGDLLDQVVEYFSETPESEDEPEIKVALVGRPNVGKSSLLNAFVGENRSIVSPISGTTRDTIDMVVRRGEQTYRFIDTAGIRRKKNVSYGPEFFGINRAFKAIRRSQVVLFVIDALDGVTEQDQKLAGRIIDDGRACVLVVNKWDAVTKDTYTINEFSKQIRSRLNFMEWAEMIFVSAQTGQRVEKILNLVDTAARQFEQRVTTSVINEVLEEAVSWHTPPTTRQGRQGKIYYGTQVSSQPPTIALFVNNPDHFKDNYRRYIERQFRENLDFTGTPIRLLWRGKKLRDVERNTANRATRA.

2 consecutive EngA-type G domains span residues 4-169 (PIVA…SETP) and 177-352 (IKVA…RQFE). GTP is bound by residues 10-17 (GRPNVGKS), 57-61 (DTGGL), 120-123 (NKCE), 183-190 (GRPNVGKS), 230-234 (DTAGI), and 295-298 (NKWD). The region spanning 353-438 (QRVTTSVINE…PIRLLWRGKK (86 aa)) is the KH-like domain.

The protein belongs to the TRAFAC class TrmE-Era-EngA-EngB-Septin-like GTPase superfamily. EngA (Der) GTPase family. In terms of assembly, associates with the 50S ribosomal subunit.

Functionally, GTPase that plays an essential role in the late steps of ribosome biogenesis. The polypeptide is GTPase Der (Acaryochloris marina (strain MBIC 11017)).